A 389-amino-acid chain; its full sequence is Choline/ethanolaminephosphotransferase 2 (389 aa).

The next 8 helical transmembrane spans lie at 49-69, 141-161, 176-196, 220-240, 252-272, 286-306, 321-338, and 350-370; these read MITLMGFMFLLTSALLGYIYS, TFWFWVISAVPFFGATWEHYF, GLALIYCGHFFTAIVGAEWWA, IILFSMIFFAVIPTLAINTSN, MLLALAMLYPLVTLIAGVLIW, HLVVLGTGLAFGFLVGRMILA, MSLLYLPFALANALTARL, and VLLGYCIFTLSLYAHFATSVI.

Belongs to the CDP-alcohol phosphatidyltransferase class-I family. Mg(2+) serves as cofactor. Mn(2+) is required as a cofactor.

The protein localises to the membrane. The catalysed reaction is CDP-ethanolamine + a 1,2-diacyl-sn-glycerol = a 1,2-diacyl-sn-glycero-3-phosphoethanolamine + CMP + H(+). It catalyses the reaction CDP-choline + a 1,2-diacyl-sn-glycerol = a 1,2-diacyl-sn-glycero-3-phosphocholine + CMP + H(+). It participates in phospholipid metabolism; phosphatidylethanolamine biosynthesis; phosphatidylethanolamine from ethanolamine: step 3/3. Its pathway is phospholipid metabolism; phosphatidylcholine biosynthesis; phosphatidylcholine from phosphocholine: step 2/2. Functionally, catalyzes both phosphatidylcholine and phosphatidylethanolamine biosynthesis from CDP-choline and CDP-ethanolamine, respectively. Has a higher cholinephosphotransferase activity than ethanolaminephosphotransferase activity. The polypeptide is Choline/ethanolaminephosphotransferase 2 (AAPT2) (Arabidopsis thaliana (Mouse-ear cress)).